A 212-amino-acid polypeptide reads, in one-letter code: Amelotin (212 aa).

Positions 1 to 16 (MKTVVLLLCLLGSAQS) are cleaved as a signal peptide. 2 disordered regions span residues 23–42 (PALG…PLTQ) and 141–212 (PSGQ…NRTK). 2 stretches are compositionally biased toward polar residues: residues 33-42 (TPGQVTPLTQ) and 165-178 (PANQ…TTPA).

Belongs to the amelotin family. In terms of processing, O-glycosylated. Post-translationally, phosphorylated by FAM20C in vitro. In terms of tissue distribution, highest expression in the mandible. Found in the basal lamina of maturation stage ameloblasts of incisors and unerupted molars. Also found in the internal basal lamina of junctional epithelium in molars.

Its subcellular location is the secreted. Its function is as follows. Is a promoter of calcium phosphate mineralization, playing a critical role in the formation of the compact, mineralized, aprismatic enamel surface layer during the maturation stage of amelogenesis. The protein is Amelotin of Rattus norvegicus (Rat).